The sequence spans 510 residues: Mitogen-activated protein kinase 9 (510 aa).

Residues 23-314 enclose the Protein kinase domain; the sequence is YQIQEVIGKG…AEEALADPYF (292 aa). Residues 29-37 and lysine 52 contribute to the ATP site; that span reads IGKGSYGVV. Aspartate 149 functions as the Proton acceptor in the catalytic mechanism. Threonine 185 carries the post-translational modification Phosphothreonine. The TXY signature appears at 185-187; it reads TDY. Residue tyrosine 187 is modified to Phosphotyrosine. Phosphothreonine is present on threonine 190. The tract at residues 393-461 is disordered; sequence NYGKGEKGSP…SDYRNGTSQT (69 aa). Residues 410–431 are compositionally biased toward basic and acidic residues; that stretch reads LPRERVPAPKKENGSHNHDIEN. The span at 433-461 shows a compositional bias: polar residues; that stretch reads SIASLVTTLESPPTSQHEGSDYRNGTSQT.

The protein belongs to the protein kinase superfamily. CMGC Ser/Thr protein kinase family. MAP kinase subfamily. Post-translationally, dually phosphorylated on Thr-185 and Tyr-187, which activates the enzyme.

The catalysed reaction is L-seryl-[protein] + ATP = O-phospho-L-seryl-[protein] + ADP + H(+). It catalyses the reaction L-threonyl-[protein] + ATP = O-phospho-L-threonyl-[protein] + ADP + H(+). Its activity is regulated as follows. Activated by threonine and tyrosine phosphorylation. The sequence is that of Mitogen-activated protein kinase 9 (MPK9) from Arabidopsis thaliana (Mouse-ear cress).